Reading from the N-terminus, the 301-residue chain is uncharacterized protein (301 aa).

Belongs to the asfivirus E301R family. Interacts with host IRF3.

Functionally, plays a role in the inhibition of host innate immune system by acting as a negatively regulator of type I interferon production. Mechanistically, interacts with and prevents host IRF3 nuclear localization to inhibit its transcriptional activity. This is an uncharacterized protein from Ornithodoros (relapsing fever ticks).